The sequence spans 358 residues: MIEKKIIADKFNSNFIWIFVDAADKYPKQMNIKANQEHIIYGEKCRLVGFLETESPSTGRFSTNHSTWTHSRPTVSGERFTHSFKTLASRMERLDQTISDRIRIVDGEISRHSDNEKICEQAACTLKTCDNVIVDVKKELEMLHSLRLEDQKKSLMNLIAKVQKSGMIQDLEKWRSLMESRYIFDNTFSSATPHGVLVEMCQCLELMSSMLRSVEQSIADRNHNGVTEKQLHEFKLAFDYFDQEKNGWLDYEHFELCLKSQGYNFSVESTLKETMSLLDPSTYEKHDYMRYMVKHETTNILDDHSAIEDALKNLDARKISDSMSRKEAEFFMSKIAKKAETSSDQVCLEYKDFVNSFY.

The EF-hand domain maps to 229-264 (KQLHEFKLAFDYFDQEKNGWLDYEHFELCLKSQGYN). Ca(2+)-binding residues include Asp242, Asn246, Trp248, and His253.

This is an uncharacterized protein from Caenorhabditis elegans.